The primary structure comprises 444 residues: Tubulin beta chain (444 aa).

Positions 11, 69, 138, 142, 143, 144, 204, and 226 each coordinate GTP. Glu-69 provides a ligand contact to Mg(2+).

It belongs to the tubulin family. As to quaternary structure, dimer of alpha and beta chains. A typical microtubule is a hollow water-filled tube with an outer diameter of 25 nm and an inner diameter of 15 nM. Alpha-beta heterodimers associate head-to-tail to form protofilaments running lengthwise along the microtubule wall with the beta-tubulin subunit facing the microtubule plus end conferring a structural polarity. Microtubules usually have 13 protofilaments but different protofilament numbers can be found in some organisms and specialized cells. It depends on Mg(2+) as a cofactor.

Its subcellular location is the cytoplasm. The protein resides in the cytoskeleton. In terms of biological role, tubulin is the major constituent of microtubules, a cylinder consisting of laterally associated linear protofilaments composed of alpha- and beta-tubulin heterodimers. Microtubules grow by the addition of GTP-tubulin dimers to the microtubule end, where a stabilizing cap forms. Below the cap, tubulin dimers are in GDP-bound state, owing to GTPase activity of alpha-tubulin. The polypeptide is Tubulin beta chain (TBB) (Onchocerca gibsoni).